A 482-amino-acid polypeptide reads, in one-letter code: Methylenetetrahydrofolate--tRNA-(uracil-5-)-methyltransferase TrmFO (482 aa).

20–25 contributes to the FAD binding site; the sequence is GGGLAG.

It belongs to the MnmG family. TrmFO subfamily. Requires FAD as cofactor.

The protein resides in the cytoplasm. It carries out the reaction uridine(54) in tRNA + (6R)-5,10-methylene-5,6,7,8-tetrahydrofolate + NADH + H(+) = 5-methyluridine(54) in tRNA + (6S)-5,6,7,8-tetrahydrofolate + NAD(+). The enzyme catalyses uridine(54) in tRNA + (6R)-5,10-methylene-5,6,7,8-tetrahydrofolate + NADPH + H(+) = 5-methyluridine(54) in tRNA + (6S)-5,6,7,8-tetrahydrofolate + NADP(+). Its function is as follows. Catalyzes the folate-dependent formation of 5-methyl-uridine at position 54 (M-5-U54) in all tRNAs. In Rhodopseudomonas palustris (strain HaA2), this protein is Methylenetetrahydrofolate--tRNA-(uracil-5-)-methyltransferase TrmFO.